The chain runs to 251 residues: Triosephosphate isomerase (251 aa).

12 to 14 contacts substrate; it reads NWK. The active-site Electrophile is His-99. Residue Glu-169 is the Proton acceptor of the active site. Substrate is bound by residues Gly-175, Ser-214, and 235–236; that span reads GG.

The protein belongs to the triosephosphate isomerase family. As to quaternary structure, homodimer.

The protein localises to the cytoplasm. It catalyses the reaction D-glyceraldehyde 3-phosphate = dihydroxyacetone phosphate. It participates in carbohydrate biosynthesis; gluconeogenesis. It functions in the pathway carbohydrate degradation; glycolysis; D-glyceraldehyde 3-phosphate from glycerone phosphate: step 1/1. Involved in the gluconeogenesis. Catalyzes stereospecifically the conversion of dihydroxyacetone phosphate (DHAP) to D-glyceraldehyde-3-phosphate (G3P). This Bradyrhizobium sp. (strain ORS 278) protein is Triosephosphate isomerase.